We begin with the raw amino-acid sequence, 462 residues long: Probable threonine/serine transporter YbxG (462 aa).

The next 12 helical transmembrane spans lie at 17–37, 38–58, 89–109, 121–141, 154–174, 190–210, 238–258, 276–296, 331–351, 355–375, 398–418, and 427–447; these read MIALGGTIGVGLFMGSASTIS, WTGPSVLLAYAICGIFIFFIM, ITAWSNWFQWIIVGMSEIIAV, PAWIPGIVAMVILGAANLISV, IKIVTIILMIIAGIGIIFFGF, GGFFAGGFSGFFFALSLVIAA, IIWRILIFYIGAIFVIVTVYP, IGITAAAGIINFVVITAAMSG, LYGTIAVLIGLAVGVVLNYIA, IFVYVYSASVLPGMIPWFIIL, FAPFTNYLTIAFLLMVLVGMW, and LIVGVIFLALVVISYYVFGIG.

This sequence belongs to the amino acid-polyamine-organocation (APC) superfamily.

The protein resides in the cell membrane. In terms of biological role, probable threonine transporter. Is also active as a minor serine permease. The polypeptide is Probable threonine/serine transporter YbxG (ybxG) (Bacillus subtilis (strain 168)).